A 274-amino-acid polypeptide reads, in one-letter code: Bis(5'-nucleosyl)-tetraphosphatase, symmetrical (274 aa).

This sequence belongs to the Ap4A hydrolase family.

The enzyme catalyses P(1),P(4)-bis(5'-adenosyl) tetraphosphate + H2O = 2 ADP + 2 H(+). Functionally, hydrolyzes diadenosine 5',5'''-P1,P4-tetraphosphate to yield ADP. This Buchnera aphidicola subsp. Acyrthosiphon pisum (strain Tuc7) protein is Bis(5'-nucleosyl)-tetraphosphatase, symmetrical.